We begin with the raw amino-acid sequence, 258 residues long: Cobalt-precorrin-4 C(11)-methyltransferase (258 aa).

Belongs to the precorrin methyltransferase family. As to quaternary structure, homodimer.

The enzyme catalyses Co-precorrin-4 + S-adenosyl-L-methionine = Co-precorrin-5A + S-adenosyl-L-homocysteine + H(+). It functions in the pathway cofactor biosynthesis; adenosylcobalamin biosynthesis; cob(II)yrinate a,c-diamide from sirohydrochlorin (anaerobic route): step 4/10. Functionally, catalyzes the methylation of C-11 in cobalt-precorrin-4 to form cobalt-precorrin-5A. In Priestia megaterium (Bacillus megaterium), this protein is Cobalt-precorrin-4 C(11)-methyltransferase (cbiF).